The primary structure comprises 168 residues: Siroheme decarboxylase NirH subunit (168 aa).

The protein belongs to the Ahb/Nir family. As to quaternary structure, probably forms a complex composed of NirD, NirL, NirG and NirH. All proteins are required for the total conversion of siroheme to didecarboxysiroheme.

The catalysed reaction is siroheme + 2 H(+) = 12,18-didecarboxysiroheme + 2 CO2. The protein operates within porphyrin-containing compound metabolism. Involved in heme d1 biosynthesis. Catalyzes the decarboxylation of siroheme into didecarboxysiroheme. The protein is Siroheme decarboxylase NirH subunit of Stutzerimonas stutzeri (Pseudomonas stutzeri).